Reading from the N-terminus, the 347-residue chain is Chlorophyll a/b light-harvesting protein PcbB (347 aa).

The next 6 membrane-spanning stretches (helical) occupy residues 25–45 (GLWL…AGAI), 64–84 (LILI…GVVV), 91–111 (AIGA…IFHV), 206–226 (LASG…WHIT), 247–267 (LSSA…FSAV), and 308–328 (LCNV…WHAI).

It belongs to the PsbB/PsbC family. IsiA/Pcb subfamily. As to quaternary structure, the antenna complex consists of chlorophylls (a and b) and chlorophyll a/b binding proteins. Chlorophyll a serves as cofactor. It depends on chlorophyll b as a cofactor.

Its subcellular location is the cellular thylakoid membrane. Its function is as follows. The antenna complex functions as a light receptor, it captures and delivers excitation energy to photosystems II and I. The Prochlorales pcb genes are not related to higher plant LHCs. This Prochlorothrix hollandica protein is Chlorophyll a/b light-harvesting protein PcbB (pcbB).